The primary structure comprises 481 residues: MASATASHTLCGIPATSSSTTNKAIAPSSARFLAKTPLRRLGFAGAAADSLFTNHVATKLRSLKSSSKPIRGVASMAKKSVGDLTAAELKGKKVFVRADLNVPLDDNQNITDDTRIRAAVPTIKHLMANGAKVILSSHLGRPKGVTPKYSLAPLVPRLSELLGIQVVKVEDCIGPEVEKLVASLPEGGVLLLENVRFYKEEEKNEPEFAKKLASLADLYVNDAFGTAHRAHASTEGVTKFLKPSVAGFLLQKELDYLVGAVSNPKRPFAAIVGGSKVSSKIGVIESLLEKCDILLLGGGMIFTFYKAQGLSVGSSLVEEDKLELATSLLEKAKAKGVSLLLPSDVVIADKFAPDANSKIVPASAIPDGWMGLDIGPDSVKTFNDALDTTKTVIWNGPMGVFEFDKFAVGTEAIAKKLADLSGKGVTTIIGGGDSVAAVEKVGVASVMSHISTGGGASLELLEGKVLPGVIALDEADAPVAV.

Residues 1-75 (MASATASHTL…SSKPIRGVAS (75 aa)) constitute a chloroplast transit peptide. (2R)-3-phosphoglycerate contacts are provided by Ala98, Asp99, Asn101, Arg115, Ser137, His138, Gly140, Arg141, Arg196, His228, and Arg229. Gly274 contacts ADP. CDP is bound at residue Gly274. Residues Lys276 and Lys280 each contribute to the AMP site. Position 280 (Lys280) interacts with ATP. Gly298 provides a ligand contact to ADP. Gly298 contributes to the CDP binding site. AMP-binding residues include Gly299 and Gly371. Gly299 and Gly371 together coordinate ATP. Residues Gly396 and Phe401 each coordinate CDP. Phe401 contacts ADP. Residue Glu402 coordinates AMP. Residues Glu402, Asp433, and Ser434 each contribute to the ATP site. Asp433 contributes to the Mg(2+) binding site.

Belongs to the phosphoglycerate kinase family. Monomer. Mg(2+) is required as a cofactor.

It is found in the plastid. Its subcellular location is the chloroplast. The catalysed reaction is (2R)-3-phosphoglycerate + ATP = (2R)-3-phospho-glyceroyl phosphate + ADP. The protein operates within carbohydrate biosynthesis; Calvin cycle. In Nicotiana tabacum (Common tobacco), this protein is Phosphoglycerate kinase, chloroplastic.